A 100-amino-acid polypeptide reads, in one-letter code: Large ribosomal subunit protein eL36A (100 aa).

T2 bears the N-acetylthreonine mark.

The protein belongs to the eukaryotic ribosomal protein eL36 family. Component of the large ribosomal subunit (LSU). Mature yeast ribosomes consist of a small (40S) and a large (60S) subunit. The 40S small subunit contains 1 molecule of ribosomal RNA (18S rRNA) and 33 different proteins (encoded by 57 genes). The large 60S subunit contains 3 rRNA molecules (25S, 5.8S and 5S rRNA) and 46 different proteins (encoded by 81 genes). N-terminally acetylated by acetyltransferase NatA.

It localises to the cytoplasm. In terms of biological role, component of the ribosome, a large ribonucleoprotein complex responsible for the synthesis of proteins in the cell. The small ribosomal subunit (SSU) binds messenger RNAs (mRNAs) and translates the encoded message by selecting cognate aminoacyl-transfer RNA (tRNA) molecules. The large subunit (LSU) contains the ribosomal catalytic site termed the peptidyl transferase center (PTC), which catalyzes the formation of peptide bonds, thereby polymerizing the amino acids delivered by tRNAs into a polypeptide chain. The nascent polypeptides leave the ribosome through a tunnel in the LSU and interact with protein factors that function in enzymatic processing, targeting, and the membrane insertion of nascent chains at the exit of the ribosomal tunnel. This Saccharomyces cerevisiae (strain ATCC 204508 / S288c) (Baker's yeast) protein is Large ribosomal subunit protein eL36A.